Here is an 87-residue protein sequence, read N- to C-terminus: uncharacterized protein (87 aa).

This is an uncharacterized protein from Saccharomyces cerevisiae (strain ATCC 204508 / S288c) (Baker's yeast).